The primary structure comprises 211 residues: Riboflavin kinase (211 aa).

Residues 1–81 form an H-T-H motif-like region; the sequence is MKCIDRRLIG…DLLRYFNILS (81 aa). Residues 82–211 form a riboflavin kinase region; sequence IRLSGRVVSG…DRVEIEIYLE (130 aa). A CDP-binding site is contributed by 91–96; sequence GLGEGA. Thr120 and Asn122 together coordinate Mg(2+). Positions 177 and 185 each coordinate FMN. Residue 190 to 193 participates in CDP binding; sequence FKLR.

The protein belongs to the archaeal riboflavin kinase family. It depends on Mg(2+) as a cofactor.

It catalyses the reaction riboflavin + CTP = CDP + FMN + H(+). It functions in the pathway cofactor biosynthesis; FMN biosynthesis; FMN from riboflavin (CTP route): step 1/1. Functionally, catalyzes the CTP-dependent phosphorylation of riboflavin (vitamin B2) to form flavin mononucleotide (FMN). This Pyrobaculum islandicum (strain DSM 4184 / JCM 9189 / GEO3) protein is Riboflavin kinase (ribK).